We begin with the raw amino-acid sequence, 427 residues long: L-glutamine:2-deoxy-scyllo-inosose aminotransferase (427 aa).

The segment at 1–20 is disordered; it reads MPLQSSRLAVDNGTPVRGKP. At Lys205 the chain carries N6-(pyridoxal phosphate)lysine.

The protein belongs to the DegT/DnrJ/EryC1 family. L-glutamine:2-deoxy-scyllo-inosose/scyllo-inosose aminotransferase subfamily. Pyridoxal 5'-phosphate serves as cofactor.

It catalyses the reaction 2-deoxy-L-scyllo-inosose + L-glutamine = 2-deoxy-scyllo-inosamine + 2-oxoglutaramate. The catalysed reaction is 3-amino-2,3-dideoxy-scyllo-inosose + L-glutamine = 2-deoxystreptamine + 2-oxoglutaramate. It participates in metabolic intermediate biosynthesis; 2-deoxystreptamine biosynthesis; 2-deoxystreptamine from D-glucose 6-phosphate: step 2/4. It functions in the pathway antibiotic biosynthesis; kanamycin biosynthesis. In terms of biological role, catalyzes the PLP-dependent transamination of 2-deoxy-scyllo-inosose (2-DOI) to form 2-deoxy-scyllo-inosamine (2-DOIA) using L-glutamine as the amino donor. Also catalyzes the transamination of 3-amino-2,3-dideoxy-scyllo-inosose (keto-2-DOIA) into 2-deoxystreptamine (2-DOS). This chain is L-glutamine:2-deoxy-scyllo-inosose aminotransferase (kanB), found in Streptomyces kanamyceticus.